The sequence spans 92 residues: Transcription factor PRE1 (92 aa).

The bHLH domain occupies 4–59; it reads RRSRQSSSAPRISDNQMIDLVSKLRQILPEIGQRRRSDKASASKVLQETCNYIRNL.

In terms of assembly, interacts with IBH1 and HFR1. Expressed in roots, leaves, stems and flowers.

Its subcellular location is the nucleus. Functionally, atypical and probable non DNA-binding bHLH transcription factor that integrates multiple signaling pathways to regulate cell elongation and plant development. Binds IBH1, forming a pair of antagonistic bHLH transcription factors that function downstream of BZR1 to mediate brassinosteroid regulation of cell elongation. Regulates light responses by binding and inhibiting the activity of the bHLH transcription factor HFR1, a critical regulator of light signaling and shade avoidance. May have a regulatory role in various aspects of gibberellin-dependent growth and development. This chain is Transcription factor PRE1 (PRE1), found in Arabidopsis thaliana (Mouse-ear cress).